The chain runs to 313 residues: Ribosomal RNA small subunit methyltransferase H (313 aa).

S-adenosyl-L-methionine is bound by residues 31–33, Asp-51, Phe-77, Asp-95, and Gln-102; that span reads GGH.

Belongs to the methyltransferase superfamily. RsmH family.

It localises to the cytoplasm. It carries out the reaction cytidine(1402) in 16S rRNA + S-adenosyl-L-methionine = N(4)-methylcytidine(1402) in 16S rRNA + S-adenosyl-L-homocysteine + H(+). Specifically methylates the N4 position of cytidine in position 1402 (C1402) of 16S rRNA. The polypeptide is Ribosomal RNA small subunit methyltransferase H (Xylella fastidiosa (strain 9a5c)).